A 296-amino-acid polypeptide reads, in one-letter code: Bifunctional protein FolD (296 aa).

NADP(+) contacts are provided by residues 166 to 168 (GRS), Ser-195, and Ile-236.

This sequence belongs to the tetrahydrofolate dehydrogenase/cyclohydrolase family. In terms of assembly, homodimer.

The enzyme catalyses (6R)-5,10-methylene-5,6,7,8-tetrahydrofolate + NADP(+) = (6R)-5,10-methenyltetrahydrofolate + NADPH. It carries out the reaction (6R)-5,10-methenyltetrahydrofolate + H2O = (6R)-10-formyltetrahydrofolate + H(+). It participates in one-carbon metabolism; tetrahydrofolate interconversion. Catalyzes the oxidation of 5,10-methylenetetrahydrofolate to 5,10-methenyltetrahydrofolate and then the hydrolysis of 5,10-methenyltetrahydrofolate to 10-formyltetrahydrofolate. This chain is Bifunctional protein FolD, found in Chlorobium limicola (strain DSM 245 / NBRC 103803 / 6330).